Consider the following 1707-residue polypeptide: MAGASVKVAVRVRPFNSREMSRDSKCIIQMSGSTTTIVNPKQPKETPKSFSFDYSYWSHTSPEDINYASQKQVYRDIGEEMLQHAFEGYNVCIFAYGQTGAGKSYTMMGKQEKDQQGIIPQLCEDLFSRINDTTNDNMSYSVEVSYMEIYCERVRDLLNPKNKGNLRVREHPLLGPYVEDLSKLAVTSYNDIQDLMDSGNKARTVAATNMNETSSRSHAVFNIIFTQKRHDAETNITTEKVSKISLVDLAGSERADSTGAKGTRLKEGANINKSLTTLGKVISALAEMDSGPNKNKKKKKTDFIPYRDSVLTWLLRENLGGNSRTAMVAALSPADINYDETLSTLRYADRAKQIRCNAIINEDPNNKLIRELKDEVTRLRDLLYAQGLGDITDTNTVPGGPKLTNALVGMSPSSSLSALSSRAASVSSLHERILFAPGSEEAIERLKETEKIIAELNETWEEKLRRTEAIRMEREALLAEMGVAMREDGGTLGVFSPKKTPHLVNLNEDPLMSECLLYYIKDGVTRVGREDAERRQDIVLSGHFIKEEHCIFRSDSRGGGEAVVTLEPCEGADTYVNGKKVTEPSILRSGNRIIMGKSHVFRFNHPEQARQERERTPCAETPAEPVDWAFAQRELLEKQGIDMKQEMEQRLQELEDQYRREREEATYLLEQQRLDYESKLEALQKQMDSRYYPEVNEEEEEPEDEVQWTERECELALWAFRKWKWYQFTSLRDLLWGNAIFLKEANAISVELKKKVQFQFVLLTDTLYSPLPPDLLPPEAAKDRETRPFPRTIVAVEVQDQKNGATHYWTLEKLRQRLDLMREMYDRAAEVPSSVVEDCDNVVTGGDPFYDRFPWFRLVGRAFVYLSNLLYPVPLVHRVAIVSEKGEVKGFLRVAVQAISADEEAPDYGSGVRQSGTAKISFDDQHFEKFQSESCPVVGMSRSGTSQEELRIVEGQGQGADAGPSADEVNNNTCSAVPPEGLLDSPEKAALDGPLDTALDHLRLGSTFTFRVTVLQASSISAEYADIFCQFNFIHRHDEAFSTEPLKNTGRGPPLGFYHVQNIAVEVTKSFIEYIKSQPIVFEVFGHYQQHPFPPLCKDVLSPLRPSRRHFPRVMPLSKPVPATKLSTMTRPSPGPCHCKYDLLVYFEICELEANGDYIPAVVDHRGGMPCMGTFLLHQGIQRRITVTLLHETGSHIRWKEVRELVVGRIRNTPETDEALIDPNILSLNILSSGYVHPAQDDRQFLDSDIPRTFYQFEAAWDSSMHNSLLLNRVTPYREKIYMTLSAYIEMENCTQPAVITKDFCMVFYSRDAKLPASRSIRNLFGSGSLRATEGNRVTGVYELSLCHVADAGSPGMQRRRRRVLDTSVAYVRGEENLAGWRPRSDSLILDHQWELEKLSLLQEVEKTRHYLLLREKLETTQRPVPEVLSPASSEDSESRSSSGASSPLSAEGQPSPLEVPNERQRELAVKCLRLLMHTFNREYTHSHVCISASESKLSEMSVTLMRDPSMSPLGAATLTPSSTCPSLIEGRYGATDVRTPQPCSRPASPEPELLPELDSKKTPSPVRATETEKEPQRLLVPDIQEIRVSPIVSKKGYLHFLEPHTAGWAKRFVVVRRPYAYMYNSDKDTVERFVLNLSTAQVEYSEDQQAMLKTPNTFAVCTEHRGILLQANSDKDMHDWLYAFNPLLAGTIRSKLSRRRSAQMRV.

Positions 5–354 (SVKVAVRVRP…LRYADRAKQI (350 aa)) constitute a Kinesin motor domain. Positions 102, 103, 104, 105, and 215 each coordinate ATP. Ser104 is a binding site for Mg(2+). Residues 439–466 (SEEAIERLKETEKIIAELNETWEEKLRR) are a coiled coil. Positions 525–581 (TRVGREDAERRQDIVLSGHFIKEEHCIFRSDSRGGGEAVVTLEPCEGADTYVNGKKV) constitute an FHA domain. 2 coiled-coil regions span residues 637–671 (EKQG…LLEQ) and 811–831 (LEKL…AAEV). The tract at residues 657 to 1105 (QYRREREEAT…LCKDVLSPLR (449 aa)) is required for interaction with CALM1, PPFIA2 and TANC2. 2 disordered regions span residues 1424–1462 (PVPE…EVPN) and 1536–1576 (TDVR…EKEP). Low complexity predominate over residues 1429 to 1453 (LSPASSEDSESRSSSGASSPLSAEG). The region spanning 1592 to 1690 (IVSKKGYLHF…WLYAFNPLLA (99 aa)) is the PH domain.

Belongs to the TRAFAC class myosin-kinesin ATPase superfamily. Kinesin family. Unc-104 subfamily. In terms of assembly, dimeric motor; dimerization is required for ATP-driven processive motility. Monomer in vitro. Interacts with PPFIA1 and PPFIA4. Interacts with CALM1; the interaction is increased in presence of calcium and increases neuronal dense core vesicles motility. Interacts with PPFIA2 and TANC2; both interactions allow the recruitment of neuronal dense core vesicles to dendritic spines and decrease in presence of calcium. Interacts with SYT4 (unphosphorylated) and SYT11; both interactions increase in presence of calcium. Interacts with MADD.

It localises to the cytoplasm. The protein localises to the cytoskeleton. The protein resides in the cell projection. Its subcellular location is the neuron projection. It is found in the axon. It localises to the perinuclear region. The protein localises to the synapse. The protein resides in the cytoplasmic vesicle. Its subcellular location is the secretory vesicle. It is found in the neuronal dense core vesicle membrane. The catalysed reaction is ATP + H2O + a kinesin associated with a microtubule at position (n) = ADP + phosphate a kinesin associated with a microtubule at position (n+1, toward the plus end).. Functionally, kinesin motor with a plus-end-directed microtubule motor activity, involved in anterograde axonal transport of synaptic vesicle precursors. Also required for neuronal dense core vesicles (DCVs) transport to the dendritic spines and axons. The interaction calcium-dependent with CALM1 increases vesicle motility and interaction with the scaffolding proteins PPFIA2 and TANC2 recruits DCVs to synaptic sites. The sequence is that of Kinesin-like protein KIF1A from Rattus norvegicus (Rat).